Reading from the N-terminus, the 192-residue chain is Ribosome hibernation promotion factor (192 aa).

Residues R95–T129 are disordered. Over residues N120–T129 the composition is skewed to acidic residues.

The protein belongs to the HPF/YfiA ribosome-associated protein family. Long HPF subfamily. As to quaternary structure, interacts with 100S ribosomes.

The protein resides in the cytoplasm. Its function is as follows. Required for dimerization of active 70S ribosomes into 100S ribosomes in stationary phase; 100S ribosomes are translationally inactive and sometimes present during exponential growth. The sequence is that of Ribosome hibernation promotion factor from Staphylococcus haemolyticus (strain JCSC1435).